Here is a 541-residue protein sequence, read N- to C-terminus: Catalase (541 aa).

The segment at 1–20 is disordered; the sequence is MPQTKGKPHEEQLEQYKNSQ. Catalysis depends on residues H74 and N147. Residue Y357 participates in heme binding.

It belongs to the catalase family. Requires heme as cofactor.

It is found in the peroxisome matrix. It catalyses the reaction 2 H2O2 = O2 + 2 H2O. Functionally, catalyzes the degradation of hydrogen peroxide (H(2)O(2)) generated by peroxisomal oxidases to water and oxygen, thereby protecting cells from the toxic effects of hydrogen peroxide. This Ascaris suum (Pig roundworm) protein is Catalase (CAT).